Reading from the N-terminus, the 381-residue chain is Stearoyl-[acyl-carrier-protein] 9-desaturase 1, chloroplastic (381 aa).

The N-terminal 26 residues, 1 to 26 (MQVVGTVRVSGCGAVVAPSRRQCRVS), are a transit peptide targeting the chloroplast. The Fe cation site is built by E120, E158, H161, E211, E244, and H247.

This sequence belongs to the fatty acid desaturase type 2 family. Homodimer. Requires Fe(2+) as cofactor.

The protein localises to the plastid. The protein resides in the chloroplast. The enzyme catalyses octadecanoyl-[ACP] + 2 reduced [2Fe-2S]-[ferredoxin] + O2 + 2 H(+) = (9Z)-octadecenoyl-[ACP] + 2 oxidized [2Fe-2S]-[ferredoxin] + 2 H2O. Its pathway is lipid metabolism; fatty acid metabolism. In terms of biological role, converts stearoyl-ACP to oleoyl-ACP by introduction of a cis double bond between carbons 9 and 10 of the acyl chain. This chain is Stearoyl-[acyl-carrier-protein] 9-desaturase 1, chloroplastic, found in Oryza sativa subsp. indica (Rice).